The sequence spans 715 residues: Bromodomain-containing protein DDB_G0278469 (715 aa).

2 disordered regions span residues 18 to 46 (EDNN…NRNA) and 186 to 425 (QQQK…ETKQ). Composition is skewed to low complexity over residues 20 to 45 (NNNN…PNRN), 186 to 204 (QQQK…PTAQ), 215 to 227 (LTAA…TTTT), 234 to 254 (TAPP…TTKK), and 261 to 281 (SKSN…TTIT). Residues 307-316 (KPKEQKKDIM) are compositionally biased toward basic and acidic residues. Positions 322 to 368 (SKKANTHEEKEEGESEEEEEEEEEEEEEEEEEEEEEQLEDKQKQTKT) form a coiled coil. Acidic residues predominate over residues 332–359 (EEGESEEEEEEEEEEEEEEEEEEEEEQL). The segment covering 366–389 (TKTPISQNKSASSNIKPLSKTSKS) has biased composition (polar residues). A compositionally biased stretch (low complexity) spans 405–414 (KKITSTTVTR). Residues 437–470 (KQQTQEEIEQELKLESIRKRIEQFINKFEKEIND) adopt a coiled-coil conformation. One can recognise a Bromo domain in the interval 474 to 599 (KDLDEGKRKI…IQFYKSLLET (126 aa)). A disordered region spans residues 653-715 (LVDEDEDECL…SEEEDQEATN (63 aa)). A compositionally biased stretch (polar residues) spans 662–672 (LNNQNNPTTYD). Residues 684-715 (QESDEESDEESDEESDEERDQLSEEEDQEATN) are compositionally biased toward acidic residues.

This chain is Bromodomain-containing protein DDB_G0278469, found in Dictyostelium discoideum (Social amoeba).